The following is a 476-amino-acid chain: Protein Cep89 homolog (476 aa).

Disordered regions lie at residues 1–29 (MSTR…KKNR) and 172–193 (LGEG…APYP). Polar residues predominate over residues 180-190 (GGSTKVSSSSA).

It localises to the cytoplasm. The protein localises to the cytosol. It is found in the mitochondrion intermembrane space. Functionally, required for mitochondrial complex IV activity. May be involved in non-associative learning. The polypeptide is Protein Cep89 homolog (Cep89) (Drosophila melanogaster (Fruit fly)).